Reading from the N-terminus, the 175-residue chain is DPY30 domain-containing protein 1 (175 aa).

Basic and acidic residues predominate over residues 94–112; that stretch reads QQKEKQKSEDFETGQEKSF. Disordered stretches follow at residues 94 to 134 and 152 to 175; these read QQKE…QAEE and APNLSRVEELDEPMLSDNGVSAPP.

The protein belongs to the dpy-30 family. In terms of assembly, component of the axonemal radial spoke complex 1 (RS1), at least composed of spoke head proteins RSPH1, RSPH3, RSPH9 and the cilia-specific component RSPH4A or sperm-specific component RSPH6A, spoke stalk proteins RSPH14, DNAJB13, DYDC1, ROPN1L and NME5, and the anchor protein IQUB. Interacts with SH3GL3.

The protein localises to the cytoplasm. It localises to the cytoskeleton. The protein resides in the flagellum axoneme. Its function is as follows. Functions as part of axonemal radial spoke complexes that play an important part in the motility of sperm and cilia. Plays a crucial role during acrosome biogenesis. In Mus musculus (Mouse), this protein is DPY30 domain-containing protein 1 (Dydc1).